Consider the following 36-residue polypeptide: Photosystem II reaction center protein Y (36 aa).

Topologically, residues 1 to 4 are lumenal; that stretch reads MDTR. A helical transmembrane segment spans residues 5–23; it reads LLVIAAPVLVAASWALFNI. Over 24–36 the chain is Stromal; that stretch reads GRLAIQQIQRLSR.

It belongs to the PsbY family. As to quaternary structure, PSII is composed of 1 copy each of membrane proteins PsbA, PsbB, PsbC, PsbD, PsbE, PsbF, PsbH, PsbI, PsbJ, PsbK, PsbL, PsbM, PsbT, PsbX, PsbY, PsbZ, Psb30/Ycf12, at least 3 peripheral proteins of the oxygen-evolving complex and a large number of cofactors. It forms dimeric complexes.

It is found in the plastid. The protein resides in the chloroplast thylakoid membrane. Loosely associated component of the core of photosystem II (PSII), it is not always seen in crystals. PSII is a light-driven water plastoquinone oxidoreductase, using light energy to abstract electrons from H(2)O, generating a proton gradient subsequently used for ATP formation. The sequence is that of Photosystem II reaction center protein Y from Thalassiosira pseudonana (Marine diatom).